A 163-amino-acid polypeptide reads, in one-letter code: Large ribosomal subunit protein mL59 (163 aa).

A disordered region spans residues P33–F53.

It belongs to the mitochondrion-specific ribosomal protein mL59 family. As to quaternary structure, component of the mitochondrial large ribosomal subunit (mt-LSU). Mature N.crassa 74S mitochondrial ribosomes consist of a small (37S) and a large (54S) subunit. The 37S small subunit contains a 16S ribosomal RNA (16S mt-rRNA) and 32 different proteins. The 54S large subunit contains a 23S rRNA (23S mt-rRNA) and 42 different proteins.

The protein resides in the mitochondrion. Its function is as follows. Component of the mitochondrial ribosome (mitoribosome), a dedicated translation machinery responsible for the synthesis of mitochondrial genome-encoded proteins, including at least some of the essential transmembrane subunits of the mitochondrial respiratory chain. The mitoribosomes are attached to the mitochondrial inner membrane and translation products are cotranslationally integrated into the membrane. This Neurospora crassa (strain ATCC 24698 / 74-OR23-1A / CBS 708.71 / DSM 1257 / FGSC 987) protein is Large ribosomal subunit protein mL59 (mrpl25).